The sequence spans 419 residues: MDKLTIQASPPLAGDVIISGAKNAALPILMAGVLAETDFVVSNVPNLRDVSTSCKLLRCLGAEVTELGDGQIRISTTNLNEFCAPYDLVKTMRASILILGPLLARYGTADVSLPGGCAIGARPVNLHLHGLEMMGAKIEVKEGYIKARVDGRLKGAHIFMDMVSVGATENLLMAAALADGETVIENAAREPEVIDLANCLIAMGAKITGVGSATLRIQGVERLQGCEYRVMPDRIETGSFLVAAAVTRGRIRCLKADPASLESVIAKLEDAGAKITTGEDWIELDMEGKRPKAVNIKTAPYPGFPTDMQAQFCVLNALAQGTATITETIFENRFMHVPELIRMGATMELEGNTCIIQGIESLSGAQVMATDLRASASLVIAGLVADGKTIVDRIYHLDRGYEHIEQKFQGLGAHVERVQ.

Residue 22-23 (KN) participates in phosphoenolpyruvate binding. R93 contacts UDP-N-acetyl-alpha-D-glucosamine. The active-site Proton donor is the C117. At C117 the chain carries 2-(S-cysteinyl)pyruvic acid O-phosphothioketal. Positions 307 and 329 each coordinate UDP-N-acetyl-alpha-D-glucosamine.

This sequence belongs to the EPSP synthase family. MurA subfamily.

The protein resides in the cytoplasm. It catalyses the reaction phosphoenolpyruvate + UDP-N-acetyl-alpha-D-glucosamine = UDP-N-acetyl-3-O-(1-carboxyvinyl)-alpha-D-glucosamine + phosphate. Its pathway is cell wall biogenesis; peptidoglycan biosynthesis. Its function is as follows. Cell wall formation. Adds enolpyruvyl to UDP-N-acetylglucosamine. The polypeptide is UDP-N-acetylglucosamine 1-carboxyvinyltransferase (Shewanella putrefaciens (strain CN-32 / ATCC BAA-453)).